The following is a 131-amino-acid chain: Histone H2B.1 (131 aa).

Residues 1 to 19 show a composition bias toward basic and acidic residues; sequence MSAKAEKKPASKAPAEKKP. Residues 1–38 are disordered; it reads MSAKAEKKPASKAPAEKKPAAKKTSTSTDGKKRSKARK. N6-acetyllysine; alternate occurs at positions 7 and 8. Glycyl lysine isopeptide (Lys-Gly) (interchain with G-Cter in SUMO); alternate cross-links involve residues lysine 7 and lysine 8. Position 11 is a phosphoserine (serine 11). The residue at position 12 (lysine 12) is an N6-acetyllysine. 4 positions are modified to N6-acetyllysine; alternate: lysine 17, lysine 18, lysine 22, and lysine 23. Residues lysine 17 and lysine 18 each participate in a glycyl lysine isopeptide (Lys-Gly) (interchain with G-Cter in SUMO); alternate cross-link. Lysine 22 carries the N6-butyryllysine; alternate modification. Lysine 23 is modified (N6-methyllysine; alternate). Lysine 35 is subject to N6-succinyllysine. Lysine 38 bears the N6,N6-dimethyllysine mark. Lysine 47 bears the N6-succinyllysine mark. Residue lysine 124 forms a Glycyl lysine isopeptide (Lys-Gly) (interchain with G-Cter in ubiquitin) linkage.

The protein belongs to the histone H2B family. In terms of assembly, the nucleosome is a histone octamer containing two molecules each of H2A, H2B, H3 and H4 assembled in one H3-H4 heterotetramer and two H2A-H2B heterodimers. The octamer wraps approximately 147 bp of DNA. Monoubiquitinated by the RAD6/UBC2-BRE1 complex to form H2BK123ub1. H2BK123ub1 gives a specific tag for epigenetic transcriptional activation and is also prerequisite for H3K4me and H3K79me formation. H2BK123ub1 also modulates the formation of double-strand breaks during meiosis and is a prerequisite for DNA-damage checkpoint activation. Deubiquitination is performed by UBP8 in presence of SGF11. Post-translationally, phosphorylated by STE20 to form H2BS10ph during progression through meiotic prophase. May be correlated with chromosome condensation. H2BS10ph is also formed after H(2)O(2) treatment, and is a step leading to apoptosis. In terms of processing, acetylated by GCN5, a component of the SAGA complex, to form H2BK11ac and H2BK16ac. H2BK16ac can also be formed by ESA1, a component of the NuA4 histone acetyltransferase (HAT) complex. Acetylation of N-terminal lysines and particularly formation of H2BK11acK16ac has a positive effect on transcription. Sumoylation to form H2BK6su or H2BK7su, and probably also H2BK16su or H2BK17su, occurs preferentially near the telomeres and represses gene transcription.

It is found in the nucleus. Its subcellular location is the chromosome. Its function is as follows. Core component of nucleosome. Nucleosomes wrap and compact DNA into chromatin, limiting DNA accessibility to the cellular machineries which require DNA as a template. Histones thereby play a central role in transcription regulation, DNA repair, DNA replication and chromosomal stability. DNA accessibility is regulated via a complex set of post-translational modifications of histones, also called histone code, and nucleosome remodeling. The protein is Histone H2B.1 (HTB1) of Saccharomyces cerevisiae (strain ATCC 204508 / S288c) (Baker's yeast).